Here is a 288-residue protein sequence, read N- to C-terminus: MSNLKQLRTRIKSVKSTQKITKAMQLVSASKMTKIKTQIANSNFYIEAINKMMSNIFSMTLCELSIEEQKFFNTMPSKANLLIVMTSERGLCGMFNYSIIKQVKNDIKELANKGEQIKLIIIGKKGYEVLKRQYANYIDSYFEFPKSHYANLILQLKEKIMYAVENLEISNCIIYFNKFKNAMTQILTKQKILPIEKHRDYSVVENYHFEYEGKNLISNLINLYLYAKINYALLQNIVSEEGARMTAMDSATNNANDLISKLVLKLNRSRQTIITTELIEIIAGAEAV.

Belongs to the ATPase gamma chain family. As to quaternary structure, F-type ATPases have 2 components, CF(1) - the catalytic core - and CF(0) - the membrane proton channel. CF(1) has five subunits: alpha(3), beta(3), gamma(1), delta(1), epsilon(1). CF(0) has three main subunits: a, b and c.

Its subcellular location is the cell inner membrane. In terms of biological role, produces ATP from ADP in the presence of a proton gradient across the membrane. The gamma chain is believed to be important in regulating ATPase activity and the flow of protons through the CF(0) complex. This chain is ATP synthase gamma chain, found in Rickettsia typhi (strain ATCC VR-144 / Wilmington).